Here is a 160-residue protein sequence, read N- to C-terminus: Nucleotide-binding protein CBU_0114 (160 aa).

It belongs to the YajQ family.

Its function is as follows. Nucleotide-binding protein. This is Nucleotide-binding protein CBU_0114 from Coxiella burnetii (strain RSA 493 / Nine Mile phase I).